An 839-amino-acid polypeptide reads, in one-letter code: Taste receptor type 1 member 2 (839 aa).

The first 19 residues, 1 to 19 (MRPRATTICSLFFLLRVLA), serve as a signal peptide directing secretion. The Extracellular portion of the chain corresponds to 20 to 566 (EPAKNSDFYL…AFLEWHEAPT (547 aa)). Asparagine 84, asparagine 127, asparagine 248, asparagine 292, asparagine 312, asparagine 368, asparagine 428, asparagine 487, and asparagine 527 each carry an N-linked (GlcNAc...) asparagine glycan. The chain crosses the membrane as a helical span at residues 567–587 (IVVALLAALGFLSTLAILVIF). Over 588-602 (WRHFQTPMVRSAGGP) the chain is Cytoplasmic. Residues 603-623 (MCFLMLTLLLVAYMVVPVYVG) form a helical membrane-spanning segment. The Extracellular segment spans residues 624-635 (PPKVSTCFCRQA). Residues 636-656 (LFPLCFTICISCIAVRSFQIV) traverse the membrane as a helical segment. At 657–681 (CVFKMASRFPRAYSYWVRYQGPYVS) the chain is on the cytoplasmic side. The chain crosses the membrane as a helical span at residues 682–702 (MAFITVLKMVTVVIGMLATGL). Over 703–727 (NPTTRIDPDDPKIMIVSCNPNYRNS) the chain is Extracellular. Residues 728-748 (LFFNTGLDLLLSVVGFSFAYM) traverse the membrane as a helical segment. The Cytoplasmic segment spans residues 749–760 (GKELPTNYNEAK). Residues 761-781 (FITLSMTFYFTSSVSLCTFMS) form a helical membrane-spanning segment. Topologically, residues 782-784 (AYN) are extracellular. A helical transmembrane segment spans residues 785 to 805 (GVLVTIMDLLVTVLNLLAISL). Residues 806-839 (GYFGPKCYMILFYPERNTPAYFNSMIQGYTMRRD) lie on the Cytoplasmic side of the membrane.

This sequence belongs to the G-protein coupled receptor 3 family. TAS1R subfamily. In terms of assembly, forms heterodimers with TAS1R3.

The protein resides in the cell membrane. In terms of biological role, putative taste receptor. TAS1R2/TAS1R3 recognizes diverse natural and synthetic sweeteners. This is Taste receptor type 1 member 2 (TAS1R2) from Papio hamadryas (Hamadryas baboon).